Reading from the N-terminus, the 129-residue chain is NADH-quinone oxidoreductase subunit A (129 aa).

The next 3 helical transmembrane spans lie at 9–29 (FPIGVVLLVAVVLAFTMLGLA), 68–88 (LLFIVFDIEAIFLYPWAVLLL), and 97–117 (LGWPGFVSMGIFVFTLVAGLV).

This sequence belongs to the complex I subunit 3 family. In terms of assembly, NDH-1 is composed of 14 different subunits. Subunits NuoA, H, J, K, L, M, N constitute the membrane sector of the complex.

It localises to the cell inner membrane. The enzyme catalyses a quinone + NADH + 5 H(+)(in) = a quinol + NAD(+) + 4 H(+)(out). In terms of biological role, NDH-1 shuttles electrons from NADH, via FMN and iron-sulfur (Fe-S) centers, to quinones in the respiratory chain. The immediate electron acceptor for the enzyme in this species is believed to be ubiquinone. Couples the redox reaction to proton translocation (for every two electrons transferred, four hydrogen ions are translocated across the cytoplasmic membrane), and thus conserves the redox energy in a proton gradient. The chain is NADH-quinone oxidoreductase subunit A from Anaeromyxobacter sp. (strain K).